A 182-amino-acid polypeptide reads, in one-letter code: Ribosome hibernation promotion factor (182 aa).

This sequence belongs to the HPF/YfiA ribosome-associated protein family. Long HPF subfamily. Interacts with 100S ribosomes.

It is found in the cytoplasm. Its function is as follows. Required for dimerization of active 70S ribosomes into 100S ribosomes in stationary phase; 100S ribosomes are translationally inactive and sometimes present during exponential growth. The chain is Ribosome hibernation promotion factor from Streptococcus pyogenes serotype M6 (strain ATCC BAA-946 / MGAS10394).